The chain runs to 231 residues: uncharacterized protein (231 aa).

This is an uncharacterized protein from Methanocaldococcus jannaschii (strain ATCC 43067 / DSM 2661 / JAL-1 / JCM 10045 / NBRC 100440) (Methanococcus jannaschii).